The following is a 510-amino-acid chain: MERLNRNRSYQEELNFIEKINDYSYRIKLGFVPNMKVEGLFYADLPLEHLMFEELQHFCSCNGVGGFLPGVKQIGNVAALPGIVGKSIGLPDIHSGYGFAIGNIAAFDVANPKAIVSPGGVGFDINCGVRLIRTNLHERDVNPMKETLAQSLFDHIPVGVGSRGIIPMNARDLDEALEMGMDWSLREGYAWAEDKEHCEEYGRMLQADSNKISLRAKKRGLPQLGTLGAGNHYAEIQAVDEIYDSFAAKSMGINRRGQICIMVHSGSRGLGHQVATDALFNMEKAMIKDGINVNDRQLACARIASDEGQNYLKGMAAAANYAWVNRSSMTFLARQAFAKCFHTTPDDLDMHVIYDVSHNIAKIEEHVVNGKLSTLLVHRKGSTRAFPPHHPLIPVDYQLTGQPVLIGGTMGTCSFVMTGTSQGMSETYGTTCHGAGRALSRAKARRSLNYQEVLDRLNASGISIRVASPKLVMEEAPESYKDVTNVVETCHLAGISKKCFKLRPIAVIKG.

Aspartate 124, cysteine 127, histidine 232, histidine 264, and histidine 358 together coordinate Mn(2+). Asparagine 231 to glutamate 235 provides a ligand contact to GMP. GMP-binding positions include histidine 358 to asparagine 359, glycine 407 to methionine 410, serine 414, histidine 433 to glycine 436, and lysine 509. Histidine 433 (GMP-histidine intermediate) is an active-site residue.

The protein belongs to the RtcB family. As to quaternary structure, catalytic component of the tRNA-splicing ligase complex. It depends on Mn(2+) as a cofactor.

It carries out the reaction a 3'-end 3'-phospho-ribonucleotide-RNA + a 5'-end dephospho-ribonucleoside-RNA + GTP = a ribonucleotidyl-ribonucleotide-RNA + GMP + diphosphate. The enzyme catalyses a 3'-end 2',3'-cyclophospho-ribonucleotide-RNA + a 5'-end dephospho-ribonucleoside-RNA + GTP + H2O = a ribonucleotidyl-ribonucleotide-RNA + GMP + diphosphate + H(+). Functionally, catalytic subunit of the tRNA-splicing ligase complex that acts by directly joining spliced tRNA halves to mature-sized tRNAs by incorporating the precursor-derived splice junction phosphate into the mature tRNA as a canonical 3',5'-phosphodiester. May act as an RNA ligase with broad substrate specificity, and may function toward other RNAs. In Trichoplax adhaerens (Trichoplax reptans), this protein is RNA-splicing ligase RtcB homolog.